Here is a 177-residue protein sequence, read N- to C-terminus: Large ribosomal subunit protein uL10 (177 aa).

Belongs to the universal ribosomal protein uL10 family. As to quaternary structure, part of the ribosomal stalk of the 50S ribosomal subunit. The N-terminus interacts with L11 and the large rRNA to form the base of the stalk. The C-terminus forms an elongated spine to which L12 dimers bind in a sequential fashion forming a multimeric L10(L12)X complex.

Its function is as follows. Forms part of the ribosomal stalk, playing a central role in the interaction of the ribosome with GTP-bound translation factors. This is Large ribosomal subunit protein uL10 from Xanthomonas axonopodis pv. citri (strain 306).